Here is a 226-residue protein sequence, read N- to C-terminus: Ribonuclease 3 (226 aa).

The 123-residue stretch at 7–129 folds into the RNase III domain; the sequence is LPRLCRTLGY…IIGAIYLDSD (123 aa). Residue Glu42 participates in Mg(2+) binding. Residue Asp46 is part of the active site. 2 residues coordinate Mg(2+): Asp115 and Glu118. The active site involves Glu118. One can recognise a DRBM domain in the interval 156-226; that stretch reads DAKTLLQEYL…AAQVLELLKK (71 aa).

Belongs to the ribonuclease III family. In terms of assembly, homodimer. It depends on Mg(2+) as a cofactor.

It is found in the cytoplasm. The catalysed reaction is Endonucleolytic cleavage to 5'-phosphomonoester.. Functionally, digests double-stranded RNA. Involved in the processing of primary rRNA transcript to yield the immediate precursors to the large and small rRNAs (23S and 16S). Processes some mRNAs, and tRNAs when they are encoded in the rRNA operon. Processes pre-crRNA and tracrRNA of type II CRISPR loci if present in the organism. The sequence is that of Ribonuclease 3 from Shewanella sp. (strain ANA-3).